A 270-amino-acid chain; its full sequence is Bark lectin (270 aa).

A signal peptide spans Ile-1–Ser-15. N-linked (GlcNAc...) asparagine glycosylation is found at Asn-60, Asn-76, and Asn-127. Mn(2+)-binding residues include Glu-141 and Asp-143. Positions 143, 145, 147, and 150 each coordinate Ca(2+). Residues Asp-150 and His-155 each coordinate Mn(2+). The N-linked (GlcNAc...) asparagine glycan is linked to Asn-201.

It belongs to the leguminous lectin family.

Functionally, galNAc-specific lectin. The sequence is that of Bark lectin from Styphnolobium japonicum (Japanese pagoda tree).